A 659-amino-acid chain; its full sequence is uncharacterized protein (659 aa).

The next 16 membrane-spanning stretches (helical) occupy residues 24–44 (TTLM…YGLF), 71–91 (FGAS…VMMV), 115–135 (IGWL…DSGV), 157–177 (RAWI…RVII), 183–203 (FVLL…GNAG), 214–234 (AVIV…TAAL), 242–262 (AVLI…AELV), 279–299 (LGLV…WALV), 311–331 (LTAL…VQTA), 365–385 (FDSL…AGFV), 393–413 (TWPV…VFTS), 433–453 (MTLN…TLAL), 490–510 (FILF…DTLV), 517–537 (EFMA…IIGI), 550–570 (IGLL…LMTM), and 596–616 (IGGA…IVAL).

To M.tuberculosis Rv0102.

The protein resides in the cell membrane. This is an uncharacterized protein from Mycobacterium leprae (strain TN).